We begin with the raw amino-acid sequence, 706 residues long: Amino-acid acetyltransferase, mitochondrial (706 aa).

2 disordered regions span residues 1–25 and 367–403; these read MSSR…GAGD and NPAN…PAKQ. The N-terminal 35 residues, 1–35, are a transit peptide targeting the mitochondrion; it reads MSSRVLASRAAQPLKRHPTVVGAGDEAYPTPRRCF. Polar residues predominate over residues 367–388; that stretch reads NPANNSQGESVVTNPISDSNAV. The span at 389–401 shows a compositional bias: low complexity; sequence SESASTEPTSTPA. An N-acetyltransferase domain is found at 527-696; the sequence is TRPNMNLDDP…YEAVCRSIQP (170 aa).

The protein belongs to the acetyltransferase family.

The protein localises to the mitochondrion. It carries out the reaction L-glutamate + acetyl-CoA = N-acetyl-L-glutamate + CoA + H(+). The protein operates within amino-acid biosynthesis; L-arginine biosynthesis; N(2)-acetyl-L-ornithine from L-glutamate: step 1/4. In terms of biological role, N-acetylglutamate synthase involved in arginine biosynthesis. The sequence is that of Amino-acid acetyltransferase, mitochondrial (arg2) from Emericella nidulans (strain FGSC A4 / ATCC 38163 / CBS 112.46 / NRRL 194 / M139) (Aspergillus nidulans).